Consider the following 734-residue polypeptide: PI-PLC X-box domain-containing protein DDB_G0293730 (734 aa).

Residues 8–70 (IKNILLKIEK…ELNEKLIVEK (63 aa)) adopt a coiled-coil conformation. In terms of domain architecture, PI-PLC X-box spans 440–604 (KLKDRKVRNL…CIYDDLVNPL (165 aa)).

This is PI-PLC X-box domain-containing protein DDB_G0293730 from Dictyostelium discoideum (Social amoeba).